Consider the following 278-residue polypeptide: HTH-type transcriptional activator RhaS (278 aa).

An HTH araC/xylS-type domain is found at N174–G272. 2 DNA-binding regions (H-T-H motif) span residues D191–T212 and V239–F262.

Binds DNA as a dimer.

It localises to the cytoplasm. In terms of biological role, activates expression of the rhaBAD and rhaT operons. This is HTH-type transcriptional activator RhaS from Escherichia coli O139:H28 (strain E24377A / ETEC).